The chain runs to 378 residues: 23S rRNA (uracil(747)-C(5))-methyltransferase RlmC (378 aa).

[4Fe-4S] cluster contacts are provided by cysteine 3, cysteine 11, cysteine 14, and cysteine 87. S-adenosyl-L-methionine contacts are provided by glutamine 212, phenylalanine 241, glutamate 262, and asparagine 309. Cysteine 336 serves as the catalytic Nucleophile.

The protein belongs to the class I-like SAM-binding methyltransferase superfamily. RNA M5U methyltransferase family. RlmC subfamily.

It carries out the reaction uridine(747) in 23S rRNA + S-adenosyl-L-methionine = 5-methyluridine(747) in 23S rRNA + S-adenosyl-L-homocysteine + H(+). Catalyzes the formation of 5-methyl-uridine at position 747 (m5U747) in 23S rRNA. This is 23S rRNA (uracil(747)-C(5))-methyltransferase RlmC from Shewanella pealeana (strain ATCC 700345 / ANG-SQ1).